A 699-amino-acid chain; its full sequence is MNPIVKSFEYGQHTVTLETGVIARQADAAVLASMGDTTVLVTVVGKKEADAGRDFFPLTVNYQEKTYAAGKIPGGFFKREGRPSEDETLIARLIDRPIRPLFPNGFKNEVQVIITVVSVDPQIEPDIISMIGTSAALAISGIPFSGPLGAARVGYIDGEYVLNPSVAQLATSQLNLVVAGTAGAVLMVESEAQALPEEVMLGSVVYGHDQQQVVIKAIAEFKAEAGKPTWDWTAPTQDADLVAQIKELAEAGLGDAYKIQVKQDRYAQVSVVKAATKEALLASNPSIDLREVDNLLGSLEKKVVRGRIIRGEPRIDGREPDMIRALSVLAGVLPRTHGSALFTRGETQALVTCTLGTERDAQKIDSIMGERTNRFMLHYNFPPYSVGETGMVGSPKRREIGHGKLAWRGINAVMPSAAEFPYSVRVVSEITESNGSSSMASVCGTSLALMDAGVPIKTSVAGIAMGLVKEGDDFVVLSDILGDEDHLGDMDFKVAGTRDGITALQMDIKIEGITKEIMDIALQQAYGARVHILNVMDQAIGSHRDDISDHAPRITVIKINPEKIRDVIGKGGAVIRALTEETGTTIELEDDGTVKIASSNGEATKEAIRRIEEITSEVEVGRIYNGKVIRIVDFGAFVNILPGKDGLVHISQISDERVANVSDHLELNQEVAVKVMEVDRQGRVRLSIKEAQTKETAAE.

Positions 485 and 491 each coordinate Mg(2+). In terms of domain architecture, KH spans 552–611 (PRITVIKINPEKIRDVIGKGGAVIRALTEETGTTIELEDDGTVKIASSNGEATKEAIRRI). An S1 motif domain is found at 621–689 (GRIYNGKVIR…RQGRVRLSIK (69 aa)).

It belongs to the polyribonucleotide nucleotidyltransferase family. Component of the RNA degradosome, which is a multiprotein complex involved in RNA processing and mRNA degradation. It depends on Mg(2+) as a cofactor.

It localises to the cytoplasm. The catalysed reaction is RNA(n+1) + phosphate = RNA(n) + a ribonucleoside 5'-diphosphate. Involved in mRNA degradation. Catalyzes the phosphorolysis of single-stranded polyribonucleotides processively in the 3'- to 5'-direction. This Shewanella baltica (strain OS223) protein is Polyribonucleotide nucleotidyltransferase.